The sequence spans 262 residues: Ribosomal RNA small subunit methyltransferase G (262 aa).

3 residues coordinate S-adenosyl-L-methionine: Gly72, Leu77, and Arg142. Residues 212–262 (RSSQLSRAEGRKGRGDGERHDGRQVRRTARDSRRSREVDRDQPTRGQSRST) are disordered. Basic and acidic residues predominate over residues 219 to 254 (AEGRKGRGDGERHDGRQVRRTARDSRRSREVDRDQP).

It belongs to the methyltransferase superfamily. RNA methyltransferase RsmG family.

The protein resides in the cytoplasm. Functionally, specifically methylates the N7 position of guanine in position 518 of 16S rRNA. This Frankia alni (strain DSM 45986 / CECT 9034 / ACN14a) protein is Ribosomal RNA small subunit methyltransferase G.